A 544-amino-acid chain; its full sequence is Secreted aspartic protease 9 (544 aa).

Residues 1–17 (MRLNSVALLSLVATALA) form the signal peptide. The disordered stretch occupies residues 31–50 (GESKDDLSPEDDSNPRFVKR). In terms of domain architecture, Peptidase A1 spans 65–479 (YMATLKIGSN…DLDDYEVSLA (415 aa)). Position 83 to 85 (83 to 85 (DTG)) interacts with pepstatin A. The cysteines at positions 98 and 195 are disulfide-linked. T167 is an active-site residue. 3 N-linked (GlcNAc...) asparagine glycosylation sites follow: N212, N240, and N252. D371 is a catalytic residue. 371–375 (DTGST) provides a ligand contact to pepstatin A. A disulfide bridge links C406 with C441. N-linked (GlcNAc...) asparagine glycosylation is found at N422 and N499. Positions 500-520 (SSGSGTTSSSGTSTSTSTRHS) are disordered.

Belongs to the peptidase A1 family. As to quaternary structure, monomer. In terms of processing, the GPI-anchor is attached to the protein in the endoplasmic reticulum and serves to target the protein to the cell surface. There, the glucosamine-inositol phospholipid moiety is cleaved off and the GPI-modified mannoprotein is covalently attached via its lipidless GPI glycan remnant to the 1,6-beta-glucan of the outer cell wall layer.

It localises to the cell membrane. The protein localises to the secreted. Its subcellular location is the cell wall. It catalyses the reaction Preferential cleavage at the carboxyl of hydrophobic amino acids, but fails to cleave 15-Leu-|-Tyr-16, 16-Tyr-|-Leu-17 and 24-Phe-|-Phe-25 of insulin B chain. Activates trypsinogen, and degrades keratin.. In terms of biological role, secreted aspartic peptidases (SAPs) are a group of ten acidic hydrolases considered as key virulence factors. These enzymes supply the fungus with nutrient amino acids as well as are able to degrade the selected host's proteins involved in the immune defense. Moreover, acts toward human hemoglobin though limited proteolysis to generate a variety of antimicrobial hemocidins, enabling to compete with the other microorganisms of the same physiological niche using the microbicidal peptides generated from the host protein. Plays a key role in defense against host by cleaving histatin-5 (Hst 5), a peptide from human saliva that carries out fungicidal activity. The cleavage rate decreases in an order of SAP2 &gt; SAP9 &gt; SAP3 &gt; SAP7 &gt; SAP4 &gt; SAP1 &gt; SAP8. The first cleavage occurs between residues 'Lys-17' and 'His-18' of Hst 5, giving DSHAKRHHGYKRKFHEK and HHSHRGY peptides. Simultaneously, the DSHAKRHHGYKRK peptide is also formed. Further fragmentation by SAP9 results in FHEK product. This is Secreted aspartic protease 9 from Candida albicans (Yeast).